A 270-amino-acid polypeptide reads, in one-letter code: Putative pyruvate, phosphate dikinase regulatory protein (270 aa).

153-160 (GVSRTSKT) serves as a coordination point for ADP.

The protein belongs to the pyruvate, phosphate/water dikinase regulatory protein family. PDRP subfamily.

The enzyme catalyses N(tele)-phospho-L-histidyl/L-threonyl-[pyruvate, phosphate dikinase] + ADP = N(tele)-phospho-L-histidyl/O-phospho-L-threonyl-[pyruvate, phosphate dikinase] + AMP + H(+). It carries out the reaction N(tele)-phospho-L-histidyl/O-phospho-L-threonyl-[pyruvate, phosphate dikinase] + phosphate + H(+) = N(tele)-phospho-L-histidyl/L-threonyl-[pyruvate, phosphate dikinase] + diphosphate. Bifunctional serine/threonine kinase and phosphorylase involved in the regulation of the pyruvate, phosphate dikinase (PPDK) by catalyzing its phosphorylation/dephosphorylation. This Halalkalibacterium halodurans (strain ATCC BAA-125 / DSM 18197 / FERM 7344 / JCM 9153 / C-125) (Bacillus halodurans) protein is Putative pyruvate, phosphate dikinase regulatory protein.